The chain runs to 218 residues: Thiopurine S-methyltransferase (218 aa).

Positions 10, 45, 66, and 123 each coordinate S-adenosyl-L-methionine.

Belongs to the class I-like SAM-binding methyltransferase superfamily. TPMT family.

It localises to the cytoplasm. It catalyses the reaction S-adenosyl-L-methionine + a thiopurine = S-adenosyl-L-homocysteine + a thiopurine S-methylether.. The protein is Thiopurine S-methyltransferase of Xanthomonas euvesicatoria pv. vesicatoria (strain 85-10) (Xanthomonas campestris pv. vesicatoria).